The chain runs to 57 residues: COP9 signalosome complex subunit 9 (57 aa).

Belongs to the CSN9 family. Component of the CSN complex, probably composed of cops1, cops2, cops3, cops4, cops5, cops6, cops7, cops8 and cops9.

The protein resides in the nucleus. Its subcellular location is the cytoplasm. The protein localises to the nucleoplasm. Functionally, component of the COP9 signalosome complex (CSN), a complex involved in various cellular and developmental processes. The CSN complex is an essential regulator of the ubiquitin (Ubl) conjugation pathway by mediating the deneddylation of the cullin subunits of SCF-type E3 ligase complexes, leading to decrease the Ubl ligase activity. May play a role in cell proliferation. In Xenopus tropicalis (Western clawed frog), this protein is COP9 signalosome complex subunit 9.